A 579-amino-acid polypeptide reads, in one-letter code: Acetolactate synthase (579 aa).

Glu61 contributes to the thiamine diphosphate binding site. FAD is bound by residues Arg163, 274–295 (HGTA…VGVR), and 317–336 (DIDP…IVGD). Positions 408–487 (QHQMWAGQFV…VKVIILNNGW (80 aa)) are thiamine pyrophosphate binding. Positions 458 and 485 each coordinate Mg(2+).

Belongs to the TPP enzyme family. Mg(2+) serves as cofactor. It depends on thiamine diphosphate as a cofactor.

The catalysed reaction is 2 pyruvate + H(+) = (2S)-2-acetolactate + CO2. It participates in amino-acid biosynthesis; L-isoleucine biosynthesis; L-isoleucine from 2-oxobutanoate: step 1/4. Its pathway is amino-acid biosynthesis; L-valine biosynthesis; L-valine from pyruvate: step 1/4. This Arthrospira platensis (Spirulina platensis) protein is Acetolactate synthase (ilvY).